A 512-amino-acid polypeptide reads, in one-letter code: 2,3-bisphosphoglycerate-independent phosphoglycerate mutase (512 aa).

Mn(2+) is bound by residues Asp12 and Ser62. Residue Ser62 is the Phosphoserine intermediate of the active site. Substrate is bound by residues His123, 154–155 (RD), Arg181, Arg187, 253–256 (RPDR), and Lys336. 5 residues coordinate Mn(2+): Asp403, His407, Asp444, His445, and His462.

This sequence belongs to the BPG-independent phosphoglycerate mutase family. As to quaternary structure, monomer. Requires Mn(2+) as cofactor.

The catalysed reaction is (2R)-2-phosphoglycerate = (2R)-3-phosphoglycerate. It functions in the pathway carbohydrate degradation; glycolysis; pyruvate from D-glyceraldehyde 3-phosphate: step 3/5. In terms of biological role, catalyzes the interconversion of 2-phosphoglycerate and 3-phosphoglycerate. The protein is 2,3-bisphosphoglycerate-independent phosphoglycerate mutase of Onion yellows phytoplasma (strain OY-M).